A 327-amino-acid chain; its full sequence is Voltage-dependent calcium channel gamma-4 subunit (327 aa).

The Cytoplasmic segment spans residues methionine 1 to glutamine 9. The chain crosses the membrane as a helical span at residues methionine 10–threonine 30. Over aspartate 31–serine 107 the chain is Extracellular. Asparagine 42 and asparagine 45 each carry an N-linked (GlcNAc...) asparagine glycan. A helical membrane pass occupies residues serine 108–glycine 128. The Cytoplasmic segment spans residues arginine 129 to asparagine 136. The helical transmembrane segment at isoleucine 137 to isoleucine 157 threads the bilayer. Over valine 158–tyrosine 186 the chain is Extracellular. Residues phenylalanine 187–isoleucine 207 traverse the membrane as a helical segment. Topologically, residues glutamate 208 to valine 327 are cytoplasmic. A disordered region spans residues serine 235–methionine 261. Residues serine 246 to arginine 256 show a composition bias toward low complexity. The residue at position 259 (serine 259) is a Phosphoserine.

It belongs to the PMP-22/EMP/MP20 family. CACNG subfamily. In terms of assembly, interacts with CACNA1C. Identified in a complex with the L-type calcium channel subunits CACNA1C, CACNA2D1 and either CACNB1 or CACNB2. Acts as an auxiliary subunit for AMPA-selective glutamate receptors (AMPARs). Interacts with GRIA1. As to expression, detected in heart left ventricle.

The protein localises to the cell membrane. Functionally, regulates the activity of L-type calcium channels that contain CACNA1C as pore-forming subunit. Regulates the trafficking and gating properties of AMPA-selective glutamate receptors (AMPARs), including GRIA1 and GRIA4. Promotes their targeting to the cell membrane and synapses and modulates their gating properties by slowing their rates of activation, deactivation and desensitization and by mediating their resensitization. The chain is Voltage-dependent calcium channel gamma-4 subunit (CACNG4) from Homo sapiens (Human).